A 116-amino-acid polypeptide reads, in one-letter code: NADH-quinone oxidoreductase subunit A (116 aa).

A run of 3 helical transmembrane segments spans residues 3–23 (FTLL…VIAL), 61–81 (FAIL…WAVI), and 88–108 (QGLI…AYAW).

This sequence belongs to the complex I subunit 3 family. As to quaternary structure, NDH-1 is composed of 14 different subunits. Subunits NuoA, H, J, K, L, M, N constitute the membrane sector of the complex.

It is found in the cell inner membrane. It carries out the reaction a quinone + NADH + 5 H(+)(in) = a quinol + NAD(+) + 4 H(+)(out). Functionally, NDH-1 shuttles electrons from NADH, via FMN and iron-sulfur (Fe-S) centers, to quinones in the respiratory chain. The immediate electron acceptor for the enzyme in this species is believed to be a menaquinone. Couples the redox reaction to proton translocation (for every two electrons transferred, four hydrogen ions are translocated across the cytoplasmic membrane), and thus conserves the redox energy in a proton gradient. This chain is NADH-quinone oxidoreductase subunit A, found in Bacteroides fragilis (strain ATCC 25285 / DSM 2151 / CCUG 4856 / JCM 11019 / LMG 10263 / NCTC 9343 / Onslow / VPI 2553 / EN-2).